Reading from the N-terminus, the 645-residue chain is 1-deoxy-D-xylulose-5-phosphate synthase (645 aa).

Thiamine diphosphate-binding positions include His-79 and 120-122 (AHS). Asp-155 is a binding site for Mg(2+). Residues 156–157 (GA), Asn-184, Tyr-293, and Glu-375 contribute to the thiamine diphosphate site. Asn-184 contacts Mg(2+).

Belongs to the transketolase family. DXPS subfamily. As to quaternary structure, homodimer. Requires Mg(2+) as cofactor. It depends on thiamine diphosphate as a cofactor.

The enzyme catalyses D-glyceraldehyde 3-phosphate + pyruvate + H(+) = 1-deoxy-D-xylulose 5-phosphate + CO2. It participates in metabolic intermediate biosynthesis; 1-deoxy-D-xylulose 5-phosphate biosynthesis; 1-deoxy-D-xylulose 5-phosphate from D-glyceraldehyde 3-phosphate and pyruvate: step 1/1. Catalyzes the acyloin condensation reaction between C atoms 2 and 3 of pyruvate and glyceraldehyde 3-phosphate to yield 1-deoxy-D-xylulose-5-phosphate (DXP). In Ruegeria sp. (strain TM1040) (Silicibacter sp.), this protein is 1-deoxy-D-xylulose-5-phosphate synthase.